The sequence spans 344 residues: Selenide, water dikinase (344 aa).

The active site involves C16. ATP contacts are provided by residues K19 and 47 to 49 (SRD). D50 serves as a coordination point for Mg(2+). ATP is bound by residues D67, D90, and 138-140 (GHS). D90 provides a ligand contact to Mg(2+). D226 provides a ligand contact to Mg(2+).

Belongs to the selenophosphate synthase 1 family. Class I subfamily. Homodimer. Requires Mg(2+) as cofactor.

The catalysed reaction is hydrogenselenide + ATP + H2O = selenophosphate + AMP + phosphate + 2 H(+). In terms of biological role, synthesizes selenophosphate from selenide and ATP. This chain is Selenide, water dikinase, found in Bordetella bronchiseptica (strain ATCC BAA-588 / NCTC 13252 / RB50) (Alcaligenes bronchisepticus).